The following is a 246-amino-acid chain: Ribonuclease PH (246 aa).

Residues Arg91 and 129-131 (GTR) each bind phosphate.

The protein belongs to the RNase PH family. Homohexameric ring arranged as a trimer of dimers.

It carries out the reaction tRNA(n+1) + phosphate = tRNA(n) + a ribonucleoside 5'-diphosphate. In terms of biological role, phosphorolytic 3'-5' exoribonuclease that plays an important role in tRNA 3'-end maturation. Removes nucleotide residues following the 3'-CCA terminus of tRNAs; can also add nucleotides to the ends of RNA molecules by using nucleoside diphosphates as substrates, but this may not be physiologically important. Probably plays a role in initiation of 16S rRNA degradation (leading to ribosome degradation) during starvation. This chain is Ribonuclease PH, found in Burkholderia orbicola (strain MC0-3).